The chain runs to 352 residues: Protein SIS1 (352 aa).

Residues 4–70 (ETKLYDLLGV…REIYDQYGLE (67 aa)) enclose the J domain. At Ser-275 the chain carries Phosphoserine. The tract at residues 300–325 (VQPVQPSQTSTYPGQGMPTPKNPSQR) is disordered. Over residues 301-312 (QPVQPSQTSTYP) the composition is skewed to polar residues.

In terms of assembly, interacts with polyadenylate-binding protein PAB1.

It is found in the cytoplasm. The protein localises to the nucleus. In terms of biological role, required for nuclear migration during mitosis. It is required for the normal initiation of translation. Might mediate the dissociation of a specific protein complex of the translation machinery. Essential for viability. The chain is Protein SIS1 (SIS1) from Saccharomyces cerevisiae (strain ATCC 204508 / S288c) (Baker's yeast).